The primary structure comprises 439 residues: Hemagglutinin-esterase (439 aa).

Residues 1–22 form the signal peptide; the sequence is MGSTCIAMAPRTLLLLIGCQLV. The segment at 12–132 is esterase domain 1; the sequence is TLLLLIGCQL…DNKRWMGNKA (121 aa). Topologically, residues 23 to 407 are virion surface; the sequence is FGFNEPLNIV…PVCIYDPLPV (385 aa). The active-site Nucleophile is Ser45. A disulfide bridge links Cys49 with Cys70. The N-linked (GlcNAc...) asparagine; by host glycan is linked to Asn94. Cys118 and Cys167 are oxidised to a cystine. The tract at residues 133–281 is receptor binding; the sequence is RFYARVYEKM…GNYKAVSLEY (149 aa). N-linked (GlcNAc...) asparagine; by host glycans are attached at residues Asn196, Asn246, Asn309, and Asn316. Cystine bridges form between Cys202–Cys291 and Cys210–Cys264. The segment at 282–395 is esterase domain 2; that stretch reads LLSLPSKAIC…QCPTAANIGY (114 aa). The cysteines at positions 322 and 327 are disulfide-linked. Asn331 carries an N-linked (GlcNAc...) asparagine; by host glycan. Catalysis depends on charge relay system residues Asp342 and His345. 2 N-linked (GlcNAc...) asparagine; by host glycosylation sites follow: Asn360 and Asn374. Cys363 and Cys387 are disulfide-bonded. Residues 408–428 traverse the membrane as a helical segment; that stretch reads VLLGVLLGIAVLIIVFLILYF. Residues 429–439 are Intravirion-facing; sequence MTDSGVRLHEA.

Belongs to the influenza type C/coronaviruses hemagglutinin-esterase family. As to quaternary structure, homodimer; disulfide-linked. Forms a complex with the M protein in the pre-Golgi. Associates then with S-M complex to form a ternary complex S-M-HE. N-glycosylated in the host RER.

The protein resides in the virion membrane. Its subcellular location is the host cell membrane. The enzyme catalyses N-acetyl-9-O-acetylneuraminate + H2O = N-acetylneuraminate + acetate + H(+). It catalyses the reaction N-acetyl-4-O-acetylneuraminate + H2O = N-acetylneuraminate + acetate + H(+). In terms of biological role, structural protein that makes short spikes at the surface of the virus. Contains receptor binding and receptor-destroying activities. Mediates de-O-acetylation of N-acetyl-4-O-acetylneuraminic acid, which is probably the receptor determinant recognized by the virus on the surface of erythrocytes and susceptible cells. This receptor-destroying activity is important for virus release as it probably helps preventing self-aggregation and ensures the efficient spread of the progeny virus from cell to cell. May serve as a secondary viral attachment protein for initiating infection, the spike protein being the major one. May become a target for both the humoral and the cellular branches of the immune system. This Murine coronavirus (strain JHM) (MHV-JHM) protein is Hemagglutinin-esterase.